We begin with the raw amino-acid sequence, 133 residues long: MAREFSRTDRVAQQVHKEVASILQNEYKHRVGDMPLITVSDVDVSRDLAHAKIFVTIYNSTEEEGKVQIKQLAEYKKFIRSILAKRLRMRSVPDLHFFEDKSIIEGMRISNLVSQTIAKDESKRDQDDSQEQE.

The protein belongs to the RbfA family. Monomer. Binds 30S ribosomal subunits, but not 50S ribosomal subunits or 70S ribosomes.

The protein resides in the cytoplasm. Functionally, one of several proteins that assist in the late maturation steps of the functional core of the 30S ribosomal subunit. Associates with free 30S ribosomal subunits (but not with 30S subunits that are part of 70S ribosomes or polysomes). Required for efficient processing of 16S rRNA. May interact with the 5'-terminal helix region of 16S rRNA. This is Ribosome-binding factor A from Alteromonas mediterranea (strain DSM 17117 / CIP 110805 / LMG 28347 / Deep ecotype).